A 370-amino-acid chain; its full sequence is Cytochrome b (370 aa).

Transmembrane regions (helical) follow at residues 30–50 (FGSM…FLAF), 74–96 (WVFR…LHIF), 109–129 (VWMS…MGYV), and 175–195 (FFVL…GHLI). Heme b-binding residues include His-80 and His-94. 2 residues coordinate heme b: His-179 and His-193. Residue His-198 participates in a ubiquinone binding. Transmembrane regions (helical) follow at residues 221 to 240 (YLGK…VLSL), 284 to 304 (VLGV…ALVN), 316 to 336 (FLVF…QCTV), and 342 to 362 (ILSP…LFIF).

Belongs to the cytochrome b family. The main subunits of complex b-c1 are: cytochrome b, cytochrome c1 and the Rieske protein. The cofactor is heme b.

Its subcellular location is the mitochondrion inner membrane. Its function is as follows. Component of the ubiquinol-cytochrome c reductase complex (complex III or cytochrome b-c1 complex) that is part of the mitochondrial respiratory chain. The b-c1 complex mediates electron transfer from ubiquinol to cytochrome c. Contributes to the generation of a proton gradient across the mitochondrial membrane that is then used for ATP synthesis. The chain is Cytochrome b from Caenorhabditis elegans.